A 326-amino-acid chain; its full sequence is Putative [LysW]-lysine/[LysW]-ornithine hydrolase (326 aa).

His66 is a Zn(2+) binding site. The active site involves Asp68. Asp90 is a Zn(2+) binding site. Glu117 acts as the Proton acceptor in catalysis. The Zn(2+) site is built by Glu118, Glu139, and His297.

This sequence belongs to the peptidase M20A family. LysK subfamily. Requires Zn(2+) as cofactor. It depends on Co(2+) as a cofactor.

It is found in the cytoplasm. It catalyses the reaction [amino-group carrier protein]-C-terminal-gamma-(L-lysyl)-L-glutamate + H2O = [amino-group carrier protein]-C-terminal-L-glutamate + L-lysine. The enzyme catalyses [amino-group carrier protein]-C-terminal-gamma-(L-ornithyl)-L-glutamate + H2O = [amino-group carrier protein]-C-terminal-L-glutamate + L-ornithine. It participates in amino-acid biosynthesis; L-lysine biosynthesis via AAA pathway; L-lysine from L-alpha-aminoadipate (Thermus route): step 5/5. The protein operates within amino-acid biosynthesis; L-arginine biosynthesis. In terms of biological role, catalyzes the release of L-lysine from [LysW]-gamma-L-lysine and the release of L-ornithine from [LysW]-L-ornithine. This Pyrococcus furiosus (strain ATCC 43587 / DSM 3638 / JCM 8422 / Vc1) protein is Putative [LysW]-lysine/[LysW]-ornithine hydrolase.